Consider the following 369-residue polypeptide: Transposase for insertion sequence element IS1201 (369 aa).

Belongs to the transposase mutator family.

Functionally, required for the transposition of the insertion element. The chain is Transposase for insertion sequence element IS1201 from Lactobacillus helveticus (Lactobacillus suntoryeus).